Here is a 443-residue protein sequence, read N- to C-terminus: ATP-dependent protease ATPase subunit HslU (443 aa).

ATP-binding positions include I18, 60 to 65 (GVGKTE), D256, E321, and R393.

It belongs to the ClpX chaperone family. HslU subfamily. A double ring-shaped homohexamer of HslV is capped on each side by a ring-shaped HslU homohexamer. The assembly of the HslU/HslV complex is dependent on binding of ATP.

Its subcellular location is the cytoplasm. Functionally, ATPase subunit of a proteasome-like degradation complex; this subunit has chaperone activity. The binding of ATP and its subsequent hydrolysis by HslU are essential for unfolding of protein substrates subsequently hydrolyzed by HslV. HslU recognizes the N-terminal part of its protein substrates and unfolds these before they are guided to HslV for hydrolysis. The chain is ATP-dependent protease ATPase subunit HslU from Salmonella arizonae (strain ATCC BAA-731 / CDC346-86 / RSK2980).